The following is a 312-amino-acid chain: Heterotepalin-4 (312 aa).

The signal sequence occupies residues Met-1–Ala-22. 2 cysteine pairs are disulfide-bonded: Cys-56-Cys-280 and Cys-107-Cys-128. Residue Glu-197 is part of the active site. Positions Tyr-284–Phe-312 are excised as a propeptide.

The catalysed reaction is Endohydrolysis of the N-glycosidic bond at one specific adenosine on the 28S rRNA.. Inhibits protein synthesis in vitro. The polypeptide is Heterotepalin-4 (Phytolacca heterotepala (Mexican pokeweed)).